The sequence spans 124 residues: Small ribosomal subunit protein bS6 (124 aa).

Residues 93-124 are disordered; that stretch reads KKAETGPSSMMKTVEREEARKAQQAEYAANNS. The span at 105 to 115 shows a compositional bias: basic and acidic residues; that stretch reads TVEREEARKAQ.

The protein belongs to the bacterial ribosomal protein bS6 family.

Functionally, binds together with bS18 to 16S ribosomal RNA. The polypeptide is Small ribosomal subunit protein bS6 (Variovorax paradoxus (strain S110)).